Consider the following 146-residue polypeptide: Protein archease (146 aa).

Residues Asp16, Asp145, and Ile146 each contribute to the Ca(2+) site.

It belongs to the archease family.

Its function is as follows. Activates the tRNA-splicing ligase complex by facilitating the enzymatic turnover of catalytic subunit RtcB. Acts by promoting the guanylylation of RtcB, a key intermediate step in tRNA ligation. Can also alter the NTP specificity of RtcB such that ATP, dGTP or ITP is used efficiently. This Methanosarcina mazei (strain ATCC BAA-159 / DSM 3647 / Goe1 / Go1 / JCM 11833 / OCM 88) (Methanosarcina frisia) protein is Protein archease.